A 482-amino-acid polypeptide reads, in one-letter code: tRNA sulfurtransferase (482 aa).

The 105-residue stretch at 61–165 (EQAIEALACI…GEELFIVSAI (105 aa)) folds into the THUMP domain. ATP contacts are provided by residues 183–184 (LI), Lys265, Gly287, and Gln296. Cysteines 344 and 456 form a disulfide. A Rhodanese domain is found at 404–482 (SGDNEVILDI…GFANVKVYRP (79 aa)). Catalysis depends on Cys456, which acts as the Cysteine persulfide intermediate.

The protein belongs to the ThiI family.

The protein resides in the cytoplasm. It carries out the reaction [ThiI sulfur-carrier protein]-S-sulfanyl-L-cysteine + a uridine in tRNA + 2 reduced [2Fe-2S]-[ferredoxin] + ATP + H(+) = [ThiI sulfur-carrier protein]-L-cysteine + a 4-thiouridine in tRNA + 2 oxidized [2Fe-2S]-[ferredoxin] + AMP + diphosphate. The catalysed reaction is [ThiS sulfur-carrier protein]-C-terminal Gly-Gly-AMP + S-sulfanyl-L-cysteinyl-[cysteine desulfurase] + AH2 = [ThiS sulfur-carrier protein]-C-terminal-Gly-aminoethanethioate + L-cysteinyl-[cysteine desulfurase] + A + AMP + 2 H(+). Its pathway is cofactor biosynthesis; thiamine diphosphate biosynthesis. Functionally, catalyzes the ATP-dependent transfer of a sulfur to tRNA to produce 4-thiouridine in position 8 of tRNAs, which functions as a near-UV photosensor. Also catalyzes the transfer of sulfur to the sulfur carrier protein ThiS, forming ThiS-thiocarboxylate. This is a step in the synthesis of thiazole, in the thiamine biosynthesis pathway. The sulfur is donated as persulfide by IscS. This Aeromonas hydrophila subsp. hydrophila (strain ATCC 7966 / DSM 30187 / BCRC 13018 / CCUG 14551 / JCM 1027 / KCTC 2358 / NCIMB 9240 / NCTC 8049) protein is tRNA sulfurtransferase.